The primary structure comprises 757 residues: GTPase-activating protein GYP7 (757 aa).

A Rab-GAP TBC domain is found at 395–640 (GLEDCIRGEA…SLWEILWTDY (246 aa)). The interval 482 to 507 (GVGSDRLPTTRESSPETPDEADDDEF) is disordered. A compositionally biased stretch (acidic residues) spans 498-507 (TPDEADDDEF).

Its function is as follows. Most effectively accelerate the intrinsic GTPase activity of YPT7. It is also active, but to a lesser extent, on YPT31, YPT32 and YPT1. YPT6 and SEC4. The chain is GTPase-activating protein GYP7 (GYP7) from Debaryomyces hansenii (strain ATCC 36239 / CBS 767 / BCRC 21394 / JCM 1990 / NBRC 0083 / IGC 2968) (Yeast).